A 1006-amino-acid polypeptide reads, in one-letter code: uncharacterized protein (1006 aa).

Positions 326 to 371 are disordered; sequence EMEKKRPRSPELVPKKIVMEKERPSSPDSEAEEREHNLRIEKERHQ. Composition is skewed to basic and acidic residues over residues 338–350 and 358–371; these read VPKK…ERPS and EREH…ERHQ. Coiled-coil stretches lie at residues 358–473 and 756–782; these read EREH…ARLA and EVQK…AFGR.

This is an uncharacterized protein from Caenorhabditis elegans.